The sequence spans 557 residues: Dihydroxy-acid dehydratase (557 aa).

Aspartate 78 lines the Mg(2+) pocket. Cysteine 119 lines the [2Fe-2S] cluster pocket. The Mg(2+) site is built by aspartate 120 and lysine 121. Lysine 121 carries the N6-carboxylysine modification. Cysteine 192 contacts [2Fe-2S] cluster. Glutamate 442 serves as a coordination point for Mg(2+). The active-site Proton acceptor is the serine 468.

Belongs to the IlvD/Edd family. As to quaternary structure, homodimer. The cofactor is [2Fe-2S] cluster. It depends on Mg(2+) as a cofactor.

It catalyses the reaction (2R)-2,3-dihydroxy-3-methylbutanoate = 3-methyl-2-oxobutanoate + H2O. It carries out the reaction (2R,3R)-2,3-dihydroxy-3-methylpentanoate = (S)-3-methyl-2-oxopentanoate + H2O. It participates in amino-acid biosynthesis; L-isoleucine biosynthesis; L-isoleucine from 2-oxobutanoate: step 3/4. It functions in the pathway amino-acid biosynthesis; L-valine biosynthesis; L-valine from pyruvate: step 3/4. Functionally, functions in the biosynthesis of branched-chain amino acids. Catalyzes the dehydration of (2R,3R)-2,3-dihydroxy-3-methylpentanoate (2,3-dihydroxy-3-methylvalerate) into 2-oxo-3-methylpentanoate (2-oxo-3-methylvalerate) and of (2R)-2,3-dihydroxy-3-methylbutanoate (2,3-dihydroxyisovalerate) into 2-oxo-3-methylbutanoate (2-oxoisovalerate), the penultimate precursor to L-isoleucine and L-valine, respectively. This chain is Dihydroxy-acid dehydratase, found in Bacillus cereus (strain AH820).